A 257-amino-acid chain; its full sequence is Short chain dehydrogenase helC (257 aa).

An N-terminal signal peptide occupies residues 1-22 (MNTAIITGAAQGVGLCIAEALA). V13 is an NADP(+) binding site. An N-linked (GlcNAc...) asparagine glycan is attached at N46. The NADP(+) site is built by D60 and N87. The N-linked (GlcNAc...) asparagine glycan is linked to N110. 4 residues coordinate NADP(+): Y154, K158, I185, and T187. Residue Y154 is the Proton acceptor of the active site. The active-site Lowers pKa of active site Tyr is K158.

It belongs to the short-chain dehydrogenases/reductases (SDR) family.

The protein operates within mycotoxin biosynthesis. In terms of biological role, short chain dehydrogenase; part of the gene cluster that mediates the biosynthesis of helvolic acid, an antibacterial nortriterpenoid. Protostadienol synthase helA cyclizes (3S)-oxidosqualene to (17Z)-protosta-17(20),24-dien-3-beta-ol (protostadienol). The synthesis of protostadienol is followed by several steps of monooxygenation, dehydrogenation, and acyl transfer to yield the final helvolic acid. Following the cyclization to the tetracyclic protostadienol by helA, cytochrome P450 monooxygenases helB1-mediated and helB2-mediated oxidation at C-4 and C-16, acyltransferase helD2-dependent acetylation of 16-OH, oxidation of C-21 by cytochrome P450 monooxygenase helB4, and short chain dehydrogenase helC-dependent oxidative decarboxylation yield the fusidane skeleton. This intermediate is further modified in three additional steps mediated by the cytochrome P450 monooxygenase helB3, the acyltransferase helD1, and the 3-ketosteroid 1-dehydrogenase helE to give helvolic acid. Compared with the late stages in the biosynthesis of helvolic acid, enzymes involved in the early stage modifications act in a relatively strict order. The hydroxylation of C-16 by helB1 and subsequent acetylation by helD2 should occur before the helB3-mediated oxidation of C-21. C-4 demethylation in fusidane-type antibiotics proceeds in an unusual manner though it is also achieved by oxidative decarboxylation. The methyl group at C-4 beta position is oxidized by helB1 and subsequently removed by the short chain dehydrogenase helC. In Aspergillus fumigatus (strain ATCC MYA-4609 / CBS 101355 / FGSC A1100 / Af293) (Neosartorya fumigata), this protein is Short chain dehydrogenase helC.